We begin with the raw amino-acid sequence, 87 residues long: U3-theraphotoxin-Hhn1a 13 (87 aa).

Positions 1–24 (MVNMKASMFLTSAGLVPLFVVCYA) are cleaved as a signal peptide. A propeptide spanning residues 25–52 (SESEEKEFPKEMLSSIFAVDNDFKQEER) is cleaved from the precursor. 3 cysteine pairs are disulfide-bonded: Cys-54-Cys-67, Cys-61-Cys-72, and Cys-66-Cys-79.

It belongs to the neurotoxin 10 (Hwtx-1) family. 51 (Hntx-8) subfamily. Hntx-8 sub-subfamily. In terms of tissue distribution, expressed by the venom gland.

The protein localises to the secreted. Functionally, ion channel inhibitor. This chain is U3-theraphotoxin-Hhn1a 13, found in Cyriopagopus hainanus (Chinese bird spider).